A 90-amino-acid chain; its full sequence is Barrier-to-autointegration factor-like protein (90 aa).

The protein belongs to the BAF family. Homodimer. Heterodimerizes with BANF1.

It is found in the nucleus. Its subcellular location is the cytoplasm. May play a role in BANF1 regulation and influence tissue-specific roles of BANF1. The chain is Barrier-to-autointegration factor-like protein (BANF2) from Bos taurus (Bovine).